A 614-amino-acid polypeptide reads, in one-letter code: Putative ankyrin repeat protein RBE_0997 (614 aa).

ANK repeat units follow at residues 3–32 (KDEE…DPNI), 36–65 (DDKP…NPNA), 69–98 (DGEP…DPNL), 102–131 (RKNT…NLNA), 135–164 (SGYP…NPNL), 168–197 (DGSP…NVEA), 201–231 (DGNT…DKEK), 239–268 (NGET…TVNI), and 272–301 (AGYT…ELKE). A Glutamine amidotransferase type-1 domain is found at 348 to 580 (NVEDIDYRKI…VQSAETFMNK (233 aa)). Cysteine 444 acts as the Nucleophile in catalysis. Active-site residues include histidine 547 and glutamate 549.

The polypeptide is Putative ankyrin repeat protein RBE_0997 (Rickettsia bellii (strain RML369-C)).